A 200-amino-acid polypeptide reads, in one-letter code: Mediator of RNA polymerase II transcription subunit 8 (200 aa).

Belongs to the Mediator complex subunit 8 family. Component of the Mediator complex.

The protein resides in the nucleus. In terms of biological role, component of the Mediator complex, a coactivator involved in the regulated transcription of nearly all RNA polymerase II-dependent genes. Mediator functions as a bridge to convey information from gene-specific regulatory proteins to the basal RNA polymerase II transcription machinery. Mediator is recruited to promoters by direct interactions with regulatory proteins and serves as a scaffold for the assembly of a functional preinitiation complex with RNA polymerase II and the general transcription factors. In Schizosaccharomyces pombe (strain 972 / ATCC 24843) (Fission yeast), this protein is Mediator of RNA polymerase II transcription subunit 8 (med8).